We begin with the raw amino-acid sequence, 289 residues long: ATP synthase gamma chain (289 aa).

It belongs to the ATPase gamma chain family. In terms of assembly, F-type ATPases have 2 components, CF(1) - the catalytic core - and CF(0) - the membrane proton channel. CF(1) has five subunits: alpha(3), beta(3), gamma(1), delta(1), epsilon(1). CF(0) has three main subunits: a, b and c.

It localises to the cell inner membrane. Its function is as follows. Produces ATP from ADP in the presence of a proton gradient across the membrane. The gamma chain is believed to be important in regulating ATPase activity and the flow of protons through the CF(0) complex. The chain is ATP synthase gamma chain from Herminiimonas arsenicoxydans.